We begin with the raw amino-acid sequence, 246 residues long: MAGHSKWANIQHRKGRQDAARSKLFSKFSKEITVAAKMGDPDPDKNPRLRLAIKEAKSQSMPKDNIERAIKKAIGGDGDAYEEIRYEGYGPNGVAVIVEAMTDNRNRTASNVRSTFTKHGGNLGETGSVGFMFERKGEVVYPASVGDADTVMMAAIEAGAEDVESSEEGHVIWCADTDLNEVSTALEAELGESDSTKLVWKPSTTTELDLEAMQKLMKLVDALEDDDDVQRVTTNFEASDEVMAAL.

The disordered stretch occupies residues 1-22 (MAGHSKWANIQHRKGRQDAARS).

This sequence belongs to the TACO1 family.

It localises to the cytoplasm. This Ruegeria pomeroyi (strain ATCC 700808 / DSM 15171 / DSS-3) (Silicibacter pomeroyi) protein is Probable transcriptional regulatory protein SPO1072.